Consider the following 349-residue polypeptide: UDP-N-acetylenolpyruvoylglucosamine reductase (349 aa).

An FAD-binding PCMH-type domain is found at 26 to 197 (FDARARVAAR…VAVTFRLPKA (172 aa)). The active site involves R173. S249 functions as the Proton donor in the catalytic mechanism. E345 is an active-site residue.

Belongs to the MurB family. Requires FAD as cofactor.

The protein resides in the cytoplasm. It carries out the reaction UDP-N-acetyl-alpha-D-muramate + NADP(+) = UDP-N-acetyl-3-O-(1-carboxyvinyl)-alpha-D-glucosamine + NADPH + H(+). Its pathway is cell wall biogenesis; peptidoglycan biosynthesis. Its function is as follows. Cell wall formation. This is UDP-N-acetylenolpyruvoylglucosamine reductase from Burkholderia pseudomallei (strain 1710b).